Here is a 110-residue protein sequence, read N- to C-terminus: U1-lycotoxin-Ls1cc (110 aa).

The N-terminal stretch at 1 to 20 (MKFVLLFGVLLVTLFSYSSA) is a signal peptide. Residues 21–44 (EMLDDFDQADEDELLSLIEKEEAR) constitute a propeptide that is removed on maturation. Intrachain disulfides connect C47-C62, C54-C71, C61-C89, and C73-C87.

Belongs to the neurotoxin 19 (CSTX) family. 03 subfamily. As to expression, expressed by the venom gland.

The protein localises to the secreted. This is U1-lycotoxin-Ls1cc from Lycosa singoriensis (Wolf spider).